The primary structure comprises 424 residues: Inhibin beta A chain (424 aa).

Positions methionine 1 to serine 20 are cleaved as a signal peptide. The propeptide occupies serine 21–arginine 308. N-linked (GlcNAc...) asparagine glycosylation is present at asparagine 165. Positions glutamate 264–serine 275 are enriched in basic and acidic residues. Residues glutamate 264–arginine 306 form a disordered region. Disulfide bonds link cysteine 312-cysteine 320, cysteine 319-cysteine 389, cysteine 348-cysteine 421, and cysteine 352-cysteine 423.

Belongs to the TGF-beta family. As to quaternary structure, dimeric, linked by one or more disulfide bonds. Inhibin A is a dimer of alpha/INHA and beta-A/INHBA. Activin A is a homodimer of beta-A/INHBA. Activin AB is a dimer of beta-A/INHBA and beta-B/INHBB. Interacts with FST and FSTL3; these interactions prevent activin A interaction to its type II receptor. Activin A interacts with ACVR2A. Activin A interacts with BMPR2. Inhibin A interacts with ACVR1; this interaction creates a non-signaling complex (NSC) that inhibits ACVR1-mediated BMP signaling. Inhibin A interacts with ACVR2A.

Its subcellular location is the secreted. Its function is as follows. Inhibins/activins are involved in regulating a number of diverse functions such as hypothalamic and pituitary hormone secretion, gonadal hormone secretion, germ cell development and maturation, erythroid differentiation, insulin secretion, nerve cell survival, embryonic axial development or bone growth, depending on their subunit composition. In terms of biological role, activin A is a homodimer of INHBA that plays a role in several essential biological processes including embryonic development, stem cell maintenance and differentiation, haematopoiesis, cell proliferation and tissue fibrosis. Signals through type I (such as ACVR1B or ACVR1C) and type II receptors (such as ACVR2A, ACVR2B or BMPR2) which, upon ligand binding, phosphorylate SMAD2 and SMAD3 intracellular signaling mediators that form a complex with SMAD4, translocate to the nucleus and modulate gene expression. Can also activate alternative non-canonical intracellular signaling pathways including the p38 MAPK, extracellular signal-regulated kinases 1/2 (ERK1/2) and c-Jun N-terminal kinases (JNKs) to modulate cell migration and differentiation. Alternatively, promotes osteoblastic differentiation via ACVRL1-SMAD1/5/9 pathway. In addition, can engage the type I receptor ACVR1 to form an ACVR1-activin A-type II receptor non-signaling complex (NSC) that renders receptors unavailable for engagement with BMPs, hence resulting in an apparent inhibition of ACVR1-mediated BMP signaling. Functionally, inhibin A is a dimer of alpha/INHA and beta-A/INHBA that functions as a feedback regulator in the hypothalamic-pituitary-gonadal (HPG) axis. Inhibits the secretion of FSH from the anterior pituitary gland by acting on pituitary gonadotrope cells. Antagonizes activin A by binding to the proteoglycan, betaglycan, and forming a stable complex with and, thereby, sequestering type II activin receptors while excluding type I receptor. In Rattus norvegicus (Rat), this protein is Inhibin beta A chain (Inhba).